We begin with the raw amino-acid sequence, 422 residues long: E3 ubiquitin-protein ligase IE2 (422 aa).

Residues Met1 to Pro10 show a composition bias toward polar residues. Disordered stretches follow at residues Met1–Ile86 and Ser165–Glu215. The segment covering Ser14–Ile26 has biased composition (basic residues). The span at Pro36–Ser63 shows a compositional bias: low complexity. A compositionally biased stretch (basic and acidic residues) spans Glu71–Glu80. Polar residues predominate over residues Asp179–Gln196. The span at Glu200–Glu215 shows a compositional bias: acidic residues. The segment at Cys220–Ala268 adopts an RING-type; degenerate zinc-finger fold. Residues Ile314 to Leu414 adopt a coiled-coil conformation.

The protein belongs to the alphabaculovirus IE2 protein family. As to quaternary structure, homooligomer. Auto-ubiquitinated.

The protein resides in the host nucleus. The enzyme catalyses S-ubiquitinyl-[E2 ubiquitin-conjugating enzyme]-L-cysteine + [acceptor protein]-L-lysine = [E2 ubiquitin-conjugating enzyme]-L-cysteine + N(6)-ubiquitinyl-[acceptor protein]-L-lysine.. RING-finger E3 ubiquitin ligase that plays an important regulatory role during the initial stages of infection. Migrates to specific nuclear foci early in infection supposely to prepare the sites for viral replication by targeting and ubiquitinating host proteins. The protein is E3 ubiquitin-protein ligase IE2 (IE2) of Bombyx mori nuclear polyhedrosis virus (BmNPV).